The sequence spans 1428 residues: MENEPDHENVEQSLCAKTSEEELNKSFNLEASLSKFSYIDMDKELEFKNDLIDDKEFDIPQVDTPPTLESILNETDDEDESFILEDPTLLNIDTIDSHSYDTSSVASSDSGDRTNLKRKKKLPDSFSLHGSVMRHSLLKGISAQIVSAADKVDAGLPTAIAVSSLIAVGTSHGLALIFGKDQNQALRLCLGSTSVGGQYGAISALSINNDCSRLLCGFAKGQITMWDLASGKLLRSITDAHPPGTAILHIKFTDDPTLAICNDSGGSVFELTFKRVMGVRTCESRCLFSGSKGEVCCIEPLHSKPELKDHPITQFSLLAMASLTKILVIGLKPSLKVWMTFPYGRMDPSSVPLLAWHFVAVQNYVNPMLAFCRGDVVHFLLVKRDESGAIHVTKQKHLHLYYDLINFTWINSRTVVLLDSVEKLHVIDRQTQEELETVEISEVQLVYNSSHFKSLATGGNVSQALALVGEKACYQSISSYGGQIFYLGTKSVYVMMLRSWRERVDHLLKQDCLTEALALAWSFHEGKAKAVVGLSGDASKRKAIVADRMVEILFHYADRALKKCPDQGKIQVMEQHFQDMVPVIVDYCLLLQRKDLLFSQMYDKLSENSVAKGVFLECLEPYILSDKLVGITPQVMKDLIVHFQDKKLMENVEALIVHMDITSLDIQQVVLMCWENRLYDAMIYVYNRGMNEFISPMEKLFRVIAPPLNAGKTLTDEQVVMGNKLLVYISCCLAGRAYPLGDIPEDLVPLVKNQVFEFLIRLHSAEASPEEEIYPYIRTLLHFDTREFLNVLALTFEDFKNDKQAVEYQQRIVDILLKVMVENSDFTPSQVGCLFTFLARQLAKPDNTLFVNRTLFDQVLEFLCSPDDDSRHSERQQVLLELLQAGGIVQFEESRLIRMAEKAEFYQICEFMYEREHQYDKIIDCYLRDPLREEEVFNYIHNILSIPGHSAEEKQSVWQKAMDHIEELVSLKPCKAAELVATHFSGHIETVIKKLQNQVLLFKFLRSLLDPREGIHVNQELLQISPCITEQFIELLCQFNPTQVIETLQVLECYRLEETIQITQKYQLHEVTAYLLEKKGDIHGAFLIMLERLQSKLQEVTHQGENTKEDPSLKDVEDTMVETIALCQRNSHNLNQQQREALWFPLLEAMMAPQKLSSSAIPHLHSEALKSLTMQVLNSMAAFIALPSILQRILQDPVYGKGKLGEIQGLILGMLDTFNYEQTLLETTTSLLNQDLHWSLCNLRASVTRGLNPKQDYCSICLQQYKRRQEMADEIIVFSCGHLYHSFCLQNKECTVEFEGQTRWTCYKCSSSNKVGKLSENSSEIKKGRITPSQVKMSPSYHQSKGDPTAKKGTSEPVLDPQQIQAFDQLCRLYRGSSRLALLTELSQNRSSESYRPFSGSQSAPAFNSIFQNENFQLQLIPPPVTED.

Serine 26, serine 32, and serine 127 each carry phosphoserine. One copy of the WD repeat lies at 195-236; that stretch reads VGGQYGAISALSINNDCSRLLCGFAKGQITMWDLASGKLLRS. The RING-type; atypical zinc-finger motif lies at 1258 to 1310; that stretch reads CSICLQQYKRRQEMADEIIVFSCGHLYHSFCLQNKECTVEFEGQTRWTCYKCS. The interval 1330 to 1356 is disordered; the sequence is ITPSQVKMSPSYHQSKGDPTAKKGTSE. The segment covering 1331–1343 has biased composition (polar residues); the sequence is TPSQVKMSPSYHQ. A compositionally biased stretch (basic and acidic residues) spans 1344–1354; it reads SKGDPTAKKGT.

Belongs to the VPS8 family. In terms of assembly, interacts with RAB5C. Interacts with TGFBRAP1. Component of the putative class C core vacuole/endosome tethering (CORVET) complex; the core of which composed of the class C Vps proteins VPS11, VPS16, VPS18 and VPS33A, is associated with VPS8 and TGFBRAP1.

It is found in the early endosome. In terms of biological role, plays a role in vesicle-mediated protein trafficking of the endocytic membrane transport pathway. Believed to act as a component of the putative CORVET endosomal tethering complexes which is proposed to be involved in the Rab5-to-Rab7 endosome conversion probably implicating MON1A/B, and via binding SNAREs and SNARE complexes to mediate tethering and docking events during SNARE-mediated membrane fusion. The CORVET complex is proposed to function as a Rab5 effector to mediate early endosome fusion probably in specific endosome subpopulations. Functions predominantly in APPL1-containing endosomes. The sequence is that of Vacuolar protein sorting-associated protein 8 homolog (VPS8) from Homo sapiens (Human).